Consider the following 445-residue polypeptide: Phosphoglucosamine mutase (445 aa).

Catalysis depends on Ser-102, which acts as the Phosphoserine intermediate. Residues Ser-102, Asp-241, Asp-243, and Asp-245 each coordinate Mg(2+). Phosphoserine is present on Ser-102.

It belongs to the phosphohexose mutase family. The cofactor is Mg(2+). Activated by phosphorylation.

It carries out the reaction alpha-D-glucosamine 1-phosphate = D-glucosamine 6-phosphate. In terms of biological role, catalyzes the conversion of glucosamine-6-phosphate to glucosamine-1-phosphate. In Salmonella paratyphi A (strain ATCC 9150 / SARB42), this protein is Phosphoglucosamine mutase.